Reading from the N-terminus, the 147-residue chain is Hemoglobin subunit beta (147 aa).

The residue at position 2 (valine 2) is an N-acetylvaline. Residues 3–147 form the Globin domain; that stretch reads HLTPDEKAAV…VANALAHKYH (145 aa). Residue threonine 13 is modified to Phosphothreonine. Position 45 is a phosphoserine (serine 45). Lysine 60 bears the N6-acetyllysine mark. Histidine 64 is a heme b binding site. The residue at position 83 (lysine 83) is an N6-acetyllysine. Histidine 93 is a heme b binding site. Cysteine 94 is modified (S-nitrosocysteine). Lysine 145 is subject to N6-acetyllysine.

Belongs to the globin family. In terms of assembly, heterotetramer of two alpha chains and two beta chains. As to expression, red blood cells.

Functionally, involved in oxygen transport from the lung to the various peripheral tissues. The polypeptide is Hemoglobin subunit beta (HBB) (Colobus polykomos (Western black-and-white colobus monkey)).